A 196-amino-acid polypeptide reads, in one-letter code: Large ribosomal subunit protein bL9 (196 aa).

Residues 174–196 (QAAADLLEGGAGQQASEYTEAQA) are disordered. The span at 186–196 (QQASEYTEAQA) shows a compositional bias: polar residues.

It belongs to the bacterial ribosomal protein bL9 family.

In terms of biological role, binds to the 23S rRNA. This Phenylobacterium zucineum (strain HLK1) protein is Large ribosomal subunit protein bL9.